A 188-amino-acid polypeptide reads, in one-letter code: Glandular kallikrein-3, submandibular (188 aa).

The Peptidase S1 domain occupies 1-185 (NYHVLLGQNN…FTSWIKEVMK (185 aa)). Asparagine 10 and asparagine 36 each carry an N-linked (GlcNAc...) asparagine glycan. Residue aspartate 47 is the Charge relay system of the active site. 3 cysteine pairs are disulfide-bonded: cysteine 79/cysteine 146, cysteine 111/cysteine 125, and cysteine 136/cysteine 161. Serine 140 serves as the catalytic Charge relay system.

It belongs to the peptidase S1 family. Kallikrein subfamily.

The catalysed reaction is Preferential cleavage of Arg-|-Xaa bonds in small molecule substrates. Highly selective action to release kallidin (lysyl-bradykinin) from kininogen involves hydrolysis of Met-|-Xaa or Leu-|-Xaa.. Its function is as follows. Glandular kallikreins cleave Met-Lys and Arg-Ser bonds in kininogen to release Lys-bradykinin. This Rattus norvegicus (Rat) protein is Glandular kallikrein-3, submandibular (Klk3).